The primary structure comprises 443 residues: Anthocyanidin 3-O-glucoside 5-O-glucosyltransferase 2 (443 aa).

Residues 1-22 form the signal peptide; sequence MVRRRVLLATFPAQGHINPALQ. The active-site Proton acceptor is the His16. His16 contacts an anthocyanidin. Residues Gln340, His355, Trp358, Asn359, Ser360, Glu363, Asp379, and Gln380 each contribute to the UDP-alpha-D-glucose site.

It belongs to the UDP-glycosyltransferase family.

It carries out the reaction an anthocyanidin 3-O-beta-D-glucoside + UDP-alpha-D-glucose = an anthocyanidin 3,5-di-O-beta-D-glucoside + UDP + 2 H(+). It participates in pigment biosynthesis; anthocyanin biosynthesis. In terms of biological role, catalyzes the glucosylation at the O-5 position of anthocyanidin 3-glucosides to form anthocyanidin 3,5-di-O-glucosides using UDP-glucose as sugar donor. Anthocyanidin 3,5-di-O-glucosides are molecules that are responsible for pigmentation. Also acts on anthocyanidin 3-O-(6-O-malonylglucoside). Much less active with hydroxycinnamoylglucose derivatives. No activity in the absence of the 3-O-glucoside group. The chain is Anthocyanidin 3-O-glucoside 5-O-glucosyltransferase 2 (PF3R6) from Perilla frutescens (Beefsteak mint).